The following is a 253-amino-acid chain: Giant extracellular hemoglobin linker 1 chain (253 aa).

The 43-residue stretch at histidine 89–isoleucine 131 folds into the LDL-receptor class A domain. Cystine bridges form between cysteine 91–cysteine 105, cysteine 98–cysteine 118, and cysteine 112–cysteine 129.

Disulfide-linked dimer of identical chains. A model is proposed for the subunit structure of the Tylorrhynchus hemoglobin, consisting of 216 polypeptide chains, 192 heme-containing chains, and 24 linker chains.

Its function is as follows. Acts as a linker for the assembly of heme-containing chains in the construction of giant hemoglobin. This chain is Giant extracellular hemoglobin linker 1 chain, found in Tylorrhynchus heterochetus (Japanese palolo worm).